A 186-amino-acid polypeptide reads, in one-letter code: Adrenodoxin, mitochondrial (186 aa).

The N-terminal 58 residues, 1 to 58 (MAARLLRVASAALGDTAGRWRLLARPRAGAGGLRGSRGPGLGGGAVATRTLSVSGRAQ), are a transit peptide targeting the mitochondrion. Ser61 is subject to Phosphoserine. Position 64 is an N6-acetyllysine; alternate (Lys64). Lys64 carries the post-translational modification N6-succinyllysine; alternate. One can recognise a 2Fe-2S ferredoxin-type domain in the interval 65–169 (ITVHFINRDG…NMTVRVPDAV (105 aa)). [2Fe-2S] cluster is bound by residues Cys104, Cys110, Cys113, and Cys150. The residue at position 156 (Lys156) is an N6-succinyllysine. Residue Ser175 is modified to Phosphoserine.

This sequence belongs to the adrenodoxin/putidaredoxin family. Interacts with CYP11A1. The cofactor is [2Fe-2S] cluster. As to expression, detected in adrenal cortex and corpus luteum (at protein level).

Its subcellular location is the mitochondrion matrix. Essential for the synthesis of various steroid hormones. Participates in the reduction of mitochondrial cytochrome P450 for steroidogenesis. Transfers electrons from adrenodoxin reductase to CYP11A1, a cytochrome P450 that catalyzes cholesterol side-chain cleavage to produce pregnenolone, the precursor of most steroid hormones. Does not form a ternary complex with adrenodoxin reductase and CYP11A1 but shuttles between the two enzymes to transfer electrons. The chain is Adrenodoxin, mitochondrial (FDX1) from Bos taurus (Bovine).